The sequence spans 92 residues: PqqA binding protein (92 aa).

This sequence belongs to the PqqD family. In terms of assembly, monomer. Interacts with PqqE.

It functions in the pathway cofactor biosynthesis; pyrroloquinoline quinone biosynthesis. Functions as a PqqA binding protein and presents PqqA to PqqE, in the pyrroloquinoline quinone (PQQ) biosynthetic pathway. The sequence is that of PqqA binding protein from Xanthomonas axonopodis pv. citri (strain 306).